We begin with the raw amino-acid sequence, 507 residues long: Microcystinase C (507 aa).

Residues 1-21 (MLDRRTLMGGILSMAGSKATG) form the signal peptide. 3 residues coordinate Zn(2+): D167, H169, and H191.

Belongs to the peptidase M81 family. Zn(2+) serves as cofactor.

With respect to regulation, inhibited by the metal chelators EDTA and 1,10-phenanthroline. Involved in peptidolytic degradation of cyclic heptapeptide hepatotoxin microcystin (MC). Cleaves both linear MC and the tetrapeptide degradation product of MC. Cleaves the Adda-Glu peptide bond of linear MC heptapeptides. The chain is Microcystinase C from Sphingomonas sp.